We begin with the raw amino-acid sequence, 1025 residues long: Multidrug resistance protein MdtC (1025 aa).

The next 12 helical transmembrane spans lie at 3-23, 333-353, 360-380, 387-407, 431-451, 463-483, 528-548, 853-873, 875-895, 897-917, 953-973, and 984-1004; these read FFAL…AITL, EVEQ…FLFL, IIPA…MYLC, LSLM…IVVL, VGFT…PLLL, FAVT…TLTP, LVGV…ISIP, VILI…LYES, VHPL…LLAL, LFNA…IGIV, PIMM…LSGG, and ITIV…TPVV.

The protein belongs to the resistance-nodulation-cell division (RND) (TC 2.A.6) family. MdtC subfamily. In terms of assembly, part of a tripartite efflux system composed of MdtA, MdtB and MdtC. MdtC forms a heteromultimer with MdtB.

Its subcellular location is the cell inner membrane. In terms of biological role, the MdtABC tripartite complex confers resistance against novobiocin and deoxycholate. This Escherichia coli O7:K1 (strain IAI39 / ExPEC) protein is Multidrug resistance protein MdtC.